The sequence spans 432 residues: Adenylosuccinate synthetase (432 aa).

Residues 12–18 and 40–42 each bind GTP; these read GDEGKGK and GHT. Catalysis depends on D13, which acts as the Proton acceptor. Residues D13 and G40 each coordinate Mg(2+). Residues 13 to 16, 38 to 41, T133, R147, Q228, T243, and R307 each bind IMP; these read DEGK and NAGH. Catalysis depends on H41, which acts as the Proton donor. 303 to 309 serves as a coordination point for substrate; the sequence is TTTGRPR. Residues R309, 335-337, and 417-419 each bind GTP; these read KLD and GVG.

It belongs to the adenylosuccinate synthetase family. As to quaternary structure, homodimer. Mg(2+) is required as a cofactor.

Its subcellular location is the cytoplasm. It carries out the reaction IMP + L-aspartate + GTP = N(6)-(1,2-dicarboxyethyl)-AMP + GDP + phosphate + 2 H(+). Its pathway is purine metabolism; AMP biosynthesis via de novo pathway; AMP from IMP: step 1/2. In terms of biological role, plays an important role in the de novo pathway of purine nucleotide biosynthesis. Catalyzes the first committed step in the biosynthesis of AMP from IMP. This Nocardioides sp. (strain ATCC BAA-499 / JS614) protein is Adenylosuccinate synthetase.